We begin with the raw amino-acid sequence, 204 residues long: Cobalt-containing nitrile hydratase subunit alpha (204 aa).

Co(2+)-binding residues include Cys108, Cys111, Ser112, and Cys113. Position 111 is a cysteine sulfinic acid (-SO2H) (Cys111). Residue Cys113 is modified to Cysteine sulfenic acid (-SOH).

This sequence belongs to the nitrile hydratase subunit alpha family. In terms of assembly, heterotetramer of two alpha and two beta chains. Co(2+) is required as a cofactor.

The enzyme catalyses an aliphatic primary amide = an aliphatic nitrile + H2O. Functionally, NHase catalyzes the hydration of various nitrile compounds to the corresponding amides. This is Cobalt-containing nitrile hydratase subunit alpha from Pseudonocardia thermophila.